The following is a 121-amino-acid chain: Large ribosomal subunit protein uL14c (121 aa).

This sequence belongs to the universal ribosomal protein uL14 family. In terms of assembly, part of the 50S ribosomal subunit.

It is found in the plastid. The protein resides in the chloroplast. In terms of biological role, binds to 23S rRNA. The polypeptide is Large ribosomal subunit protein uL14c (Guillardia theta (Cryptophyte)).